A 399-amino-acid polypeptide reads, in one-letter code: Argininosuccinate synthase (399 aa).

ATP is bound by residues 10-18 (AYSGGVDTS) and alanine 38. Tyrosine 89 is an L-citrulline binding site. Glycine 119 is an ATP binding site. L-aspartate contacts are provided by threonine 121, asparagine 125, and aspartate 126. An L-citrulline-binding site is contributed by asparagine 125. L-citrulline-binding residues include arginine 129, serine 177, serine 186, glutamate 262, and tyrosine 274.

This sequence belongs to the argininosuccinate synthase family. Type 1 subfamily. In terms of assembly, homotetramer.

The protein resides in the cytoplasm. It carries out the reaction L-citrulline + L-aspartate + ATP = 2-(N(omega)-L-arginino)succinate + AMP + diphosphate + H(+). It participates in amino-acid biosynthesis; L-arginine biosynthesis; L-arginine from L-ornithine and carbamoyl phosphate: step 2/3. The protein is Argininosuccinate synthase of Acaryochloris marina (strain MBIC 11017).